Here is a 425-residue protein sequence, read N- to C-terminus: MCTTISFAEPEIVLGHGRRVLFVNPDDLQIFKEIELPPDLGLKGLGSQSQESCPAAAAATSTSTATATCAGKEPGGKEQQLTKQPEEGGTTASGSGVTSTSVQNVTYSPDGQLLAVTTSGGQKALLLYRSRPENARLLSTRPLARAASAVRFCSDSSSVLVTDKTGDCYQYDCVELEAPPRLLLGHLSVVYDILWSEDQQHIITCDRDDKIRVTNYPATFDIHSYCLGHREFVSGLALLTDKHIASASGDKTLRVWNYIQGKELLQHELPAPAVRLLVRQLEPEKIFQAAVLFYEHVDALGLYRLERSSDDIWSVTATQLVCAEAGSWSISNFTLTSDRIYVTGAENERLSLRVYDIATGQPATSGVPEGWVKMVLDGLGANEEGAPPFIPEDLSVWFKKRFDNVSDYLERKKRRIEEQQQQKCG.

Residues 67–102 (ATCAGKEPGGKEQQLTKQPEEGGTTASGSGVTSTSV) are disordered. Over residues 88–102 (GGTTASGSGVTSTSV) the composition is skewed to low complexity. 5 WD repeats span residues 97–138 (VTST…ARLL), 142–181 (PLAR…APPR), 185–224 (GHLS…DIHS), 228–266 (GHRE…ELLQ), and 325–365 (AGSW…PATS).

The protein belongs to the WD repeat TRM82 family. Forms a heterodimer with the catalytic subunit Mettl1. Interacts with mei-P26 and weakly interacts with bgcn; required for the function or formation of the mei-P26-bgcn-bam-sxl complex. Interacts with nanos; may be involved in mei-P26-dependent derepression of the BMP signaling pathway. Interacts with Myc; the interaction may be mediated by mei-P26 and may be involved in the regulation of ribosome biogenesis. In testis, it is present at high level in hub cells, a niche for germline stem cells of testis. Ubiquitously expressed in all testicular cells throughout spermatogenesis. Ubiquitously expressed in all germline and somatic cells of the ovary.

Its subcellular location is the nucleus. The protein resides in the cytoplasm. The protein operates within tRNA modification; N(7)-methylguanine-tRNA biosynthesis. Its function is as follows. Required for the Mettl1-dependent formation of N(7)-methylguanine at position 46 (m7G46) in tRNA. In the Mettl1-wuho methyltransferase complex, it is required to stabilize and induce conformational changes of the catalytic subunit. Required for binding of nanos mRNA and repression of translation by the mei-P26-bgcn-bam-sxl complex. May cooperate with mei-P26 and nanos to derepress the BMP signaling pathway. May cooperate with mei-P26 to suppress expression of a subset of microRNAs. May cooperate with mei-P26 to regulate bam expression levels in germline cells during gametogenesis. Required to promote mitosis to meiosis transition during gametogenesis. May regulate germline cell division in part by regulating ribosome biogenesis. This Drosophila yakuba (Fruit fly) protein is tRNA (guanine-N(7)-)-methyltransferase non-catalytic subunit wuho.